A 335-amino-acid polypeptide reads, in one-letter code: Luciferase-like monooxygenase (335 aa).

To bacterial alkanal monooxygenase alpha and beta chains.

In Escherichia coli O6:H1 (strain CFT073 / ATCC 700928 / UPEC), this protein is Luciferase-like monooxygenase (yhbW).